Reading from the N-terminus, the 379-residue chain is Putative glutamate--cysteine ligase 2 (379 aa).

The protein belongs to the glutamate--cysteine ligase type 2 family. YbdK subfamily.

It carries out the reaction L-cysteine + L-glutamate + ATP = gamma-L-glutamyl-L-cysteine + ADP + phosphate + H(+). ATP-dependent carboxylate-amine ligase which exhibits weak glutamate--cysteine ligase activity. The sequence is that of Putative glutamate--cysteine ligase 2 from Roseiflexus castenholzii (strain DSM 13941 / HLO8).